Here is a 702-residue protein sequence, read N- to C-terminus: Ribosomal RNA large subunit methyltransferase K/L (702 aa).

The THUMP domain occupies 43–154 (LVYQSLMWSR…KETASIALDL (112 aa)).

Belongs to the methyltransferase superfamily. RlmKL family.

Its subcellular location is the cytoplasm. It catalyses the reaction guanosine(2445) in 23S rRNA + S-adenosyl-L-methionine = N(2)-methylguanosine(2445) in 23S rRNA + S-adenosyl-L-homocysteine + H(+). It carries out the reaction guanosine(2069) in 23S rRNA + S-adenosyl-L-methionine = N(2)-methylguanosine(2069) in 23S rRNA + S-adenosyl-L-homocysteine + H(+). In terms of biological role, specifically methylates the guanine in position 2445 (m2G2445) and the guanine in position 2069 (m7G2069) of 23S rRNA. The chain is Ribosomal RNA large subunit methyltransferase K/L from Escherichia coli O6:H1 (strain CFT073 / ATCC 700928 / UPEC).